The chain runs to 258 residues: L-fucose dehydrogenase (258 aa).

Residues S17, I19, R39, H40, E63, L64, and N90 each contribute to the NADP(+) site. The beta-L-fucose site is built by N94, S140, K141, Q147, and Y153. Positions 153 and 157 each coordinate NADP(+). Residue Y153 is the Proton acceptor of the active site. Positions 184 and 185 each coordinate beta-L-fucose. Residues V186 and T188 each coordinate NADP(+).

The protein belongs to the short-chain dehydrogenases/reductases (SDR) family. Homotetramer; dimer of dimers.

The catalysed reaction is beta-L-fucose + NADP(+) = L-fucono-1,5-lactone + NADPH + H(+). It catalyses the reaction D-arabinose + NADP(+) = D-arabinono-1,5-lactone + NADPH + H(+). It functions in the pathway carbohydrate degradation; L-fucose degradation. Functionally, L-fucose dehydrogenase involved in an L-fucose degradation pathway. Catalyzes the oxidation of L-fucose to L-fucono-1,5-lactone. Can also act on D-arabinose, with lower catalytic efficiency, and has weak activity with L-galactose and 4-deoxy-L-fucose. Shows a preference for NADP(+) over NAD(+). This Burkholderia multivorans (strain ATCC 17616 / 249) protein is L-fucose dehydrogenase.